The primary structure comprises 162 residues: Endoribonuclease YbeY (162 aa).

Zn(2+)-binding residues include His126, His130, and His136.

The protein belongs to the endoribonuclease YbeY family. It depends on Zn(2+) as a cofactor.

It localises to the cytoplasm. Its function is as follows. Single strand-specific metallo-endoribonuclease involved in late-stage 70S ribosome quality control and in maturation of the 3' terminus of the 16S rRNA. This chain is Endoribonuclease YbeY, found in Fusobacterium nucleatum subsp. nucleatum (strain ATCC 25586 / DSM 15643 / BCRC 10681 / CIP 101130 / JCM 8532 / KCTC 2640 / LMG 13131 / VPI 4355).